The following is a 254-amino-acid chain: DNA repair protein RecO (254 aa).

It belongs to the RecO family.

In terms of biological role, involved in DNA repair and RecF pathway recombination. The protein is DNA repair protein RecO of Verminephrobacter eiseniae (strain EF01-2).